The primary structure comprises 208 residues: LexA repressor (208 aa).

Positions 29–49 (VREICGAVGLSSTSTVHGHIN) form a DNA-binding region, H-T-H motif. Catalysis depends on for autocatalytic cleavage activity residues Ser129 and Lys167.

The protein belongs to the peptidase S24 family. In terms of assembly, homodimer.

The enzyme catalyses Hydrolysis of Ala-|-Gly bond in repressor LexA.. In terms of biological role, represses a number of genes involved in the response to DNA damage (SOS response), including recA and lexA. In the presence of single-stranded DNA, RecA interacts with LexA causing an autocatalytic cleavage which disrupts the DNA-binding part of LexA, leading to derepression of the SOS regulon and eventually DNA repair. This Limosilactobacillus fermentum (strain NBRC 3956 / LMG 18251) (Lactobacillus fermentum) protein is LexA repressor.